The chain runs to 618 residues: DNA mismatch repair protein MutL (618 aa).

Over residues 366–378 (AEPTAAREPATPR) the composition is skewed to low complexity. The tract at residues 366 to 403 (AEPTAAREPATPRYSDGASGGNGGRQSAGGWPHAQPGY) is disordered. The span at 383–392 (ASGGNGGRQS) shows a compositional bias: gly residues.

It belongs to the DNA mismatch repair MutL/HexB family.

Its function is as follows. This protein is involved in the repair of mismatches in DNA. It is required for dam-dependent methyl-directed DNA mismatch repair. May act as a 'molecular matchmaker', a protein that promotes the formation of a stable complex between two or more DNA-binding proteins in an ATP-dependent manner without itself being part of a final effector complex. The chain is DNA mismatch repair protein MutL from Salmonella typhi.